A 355-amino-acid polypeptide reads, in one-letter code: UDP-N-acetylglucosamine--N-acetylmuramyl-(pentapeptide) pyrophosphoryl-undecaprenol N-acetylglucosamine transferase (355 aa).

Residues 15 to 17 (TGG), Asn-127, Arg-163, Ser-191, Ile-244, 263 to 268 (ALTVSE), and Gln-288 contribute to the UDP-N-acetyl-alpha-D-glucosamine site.

It belongs to the glycosyltransferase 28 family. MurG subfamily.

Its subcellular location is the cell inner membrane. It carries out the reaction di-trans,octa-cis-undecaprenyl diphospho-N-acetyl-alpha-D-muramoyl-L-alanyl-D-glutamyl-meso-2,6-diaminopimeloyl-D-alanyl-D-alanine + UDP-N-acetyl-alpha-D-glucosamine = di-trans,octa-cis-undecaprenyl diphospho-[N-acetyl-alpha-D-glucosaminyl-(1-&gt;4)]-N-acetyl-alpha-D-muramoyl-L-alanyl-D-glutamyl-meso-2,6-diaminopimeloyl-D-alanyl-D-alanine + UDP + H(+). It participates in cell wall biogenesis; peptidoglycan biosynthesis. Its function is as follows. Cell wall formation. Catalyzes the transfer of a GlcNAc subunit on undecaprenyl-pyrophosphoryl-MurNAc-pentapeptide (lipid intermediate I) to form undecaprenyl-pyrophosphoryl-MurNAc-(pentapeptide)GlcNAc (lipid intermediate II). This chain is UDP-N-acetylglucosamine--N-acetylmuramyl-(pentapeptide) pyrophosphoryl-undecaprenol N-acetylglucosamine transferase, found in Salmonella enteritidis PT4 (strain P125109).